The sequence spans 351 residues: Transaldolase (351 aa).

The active-site Schiff-base intermediate with substrate is Lys-138.

Belongs to the transaldolase family. Type 2 subfamily.

The protein resides in the cytoplasm. It catalyses the reaction D-sedoheptulose 7-phosphate + D-glyceraldehyde 3-phosphate = D-erythrose 4-phosphate + beta-D-fructose 6-phosphate. The protein operates within carbohydrate degradation; pentose phosphate pathway; D-glyceraldehyde 3-phosphate and beta-D-fructose 6-phosphate from D-ribose 5-phosphate and D-xylulose 5-phosphate (non-oxidative stage): step 2/3. Functionally, transaldolase is important for the balance of metabolites in the pentose-phosphate pathway. This chain is Transaldolase (tal), found in Neisseria meningitidis serogroup A / serotype 4A (strain DSM 15465 / Z2491).